Reading from the N-terminus, the 326-residue chain is Melanocortin receptor 4 (326 aa).

Over residues 1–14 the composition is skewed to basic residues; it reads MNTSHHHGLHHSFR. The disordered stretch occupies residues 1–31; that stretch reads MNTSHHHGLHHSFRNHSQGALPVGKPSHGDR. Topologically, residues 1-46 are extracellular; sequence MNTSHHHGLHHSFRNHSQGALPVGKPSHGDRGSASGCYEQLLISTE. Asn2 and Asn15 each carry an N-linked (GlcNAc...) asparagine glycan. A helical membrane pass occupies residues 47–67; that stretch reads IFLTLGLVSLLENILVIAAIV. Residues 68–71 are Cytoplasmic-facing; the sequence is KNKN. Residues 72 to 92 form a helical membrane-spanning segment; it reads LHSPMYFFICSLAVADLLVSV. Residues 93–121 lie on the Extracellular side of the membrane; sequence SNASETVVMALITGGNLTNRESIIKNMDN. Residues Asn94 and Asn108 are each glycosylated (N-linked (GlcNAc...) asparagine). Residues 122 to 142 form a helical membrane-spanning segment; the sequence is VFDSMICSSLLASIWSLLAIA. Topologically, residues 143 to 163 are cytoplasmic; the sequence is VDRYITIFYALRYHNIMTQRR. A helical transmembrane segment spans residues 164 to 184; it reads AGTIITCIWTFCTVSGVLFIV. At 185–190 the chain is on the extracellular side; sequence YSESTT. Residues 191-211 traverse the membrane as a helical segment; that stretch reads VLICLISMFFTMLALMASLYV. Residues 212–246 are Cytoplasmic-facing; the sequence is HMFLLARLHMKRIAALPGNGPIWQAANMKGAITIT. The chain crosses the membrane as a helical span at residues 247–267; that stretch reads ILLGVFVVCWAPFFLHLILMI. Over 268–281 the chain is Extracellular; it reads SCPRNPYCVCFMSH. A helical transmembrane segment spans residues 282–302; that stretch reads FNMYLILIMCNSVIDPLIYAF. At 303 to 326 the chain is on the cytoplasmic side; it reads RSQEMRKTFKEICCCWYGLASLCV. Cys316 is lipidated: S-palmitoyl cysteine.

The protein belongs to the G-protein coupled receptor 1 family. Homodimer; disulfide-linked, also forms higher order oligomers. Interacts with mrap2a; decreasing ligand-sensitivity. Interacts with mrap2b; increasing ligand-sensitivity and generation of cAMP.

The protein resides in the cell membrane. In terms of biological role, receptor specific to the heptapeptide core common to adrenocorticotropic hormone and alpha-, beta-, and gamma-MSH. Plays a central role in energy homeostasis and somatic growth. This receptor is mediated by G proteins that stimulate adenylate cyclase (cAMP). The polypeptide is Melanocortin receptor 4 (mc4r) (Danio rerio (Zebrafish)).